We begin with the raw amino-acid sequence, 292 residues long: Elongation factor Ts (292 aa).

Residues Thr-80–Val-83 form an involved in Mg(2+) ion dislocation from EF-Tu region.

It belongs to the EF-Ts family.

It is found in the cytoplasm. Its function is as follows. Associates with the EF-Tu.GDP complex and induces the exchange of GDP to GTP. It remains bound to the aminoacyl-tRNA.EF-Tu.GTP complex up to the GTP hydrolysis stage on the ribosome. In Pediococcus pentosaceus (strain ATCC 25745 / CCUG 21536 / LMG 10740 / 183-1w), this protein is Elongation factor Ts.